The following is a 166-amino-acid chain: Protein-export protein SecB (166 aa).

Belongs to the SecB family. In terms of assembly, homotetramer, a dimer of dimers. One homotetramer interacts with 1 SecA dimer.

It is found in the cytoplasm. Its function is as follows. One of the proteins required for the normal export of preproteins out of the cell cytoplasm. It is a molecular chaperone that binds to a subset of precursor proteins, maintaining them in a translocation-competent state. It also specifically binds to its receptor SecA. This Rhizorhabdus wittichii (strain DSM 6014 / CCUG 31198 / JCM 15750 / NBRC 105917 / EY 4224 / RW1) (Sphingomonas wittichii) protein is Protein-export protein SecB.